The following is a 247-amino-acid chain: tRNA pseudouridine synthase A (247 aa).

Residue aspartate 57 is the Nucleophile of the active site. Tyrosine 115 contacts substrate.

This sequence belongs to the tRNA pseudouridine synthase TruA family. In terms of assembly, homodimer.

It catalyses the reaction uridine(38/39/40) in tRNA = pseudouridine(38/39/40) in tRNA. Formation of pseudouridine at positions 38, 39 and 40 in the anticodon stem and loop of transfer RNAs. The protein is tRNA pseudouridine synthase A of Chlorobaculum tepidum (strain ATCC 49652 / DSM 12025 / NBRC 103806 / TLS) (Chlorobium tepidum).